The primary structure comprises 374 residues: tRNA-specific 2-thiouridylase MnmA (374 aa).

ATP is bound by residues 13–20 and Met-39; that span reads GMSGGVDS. The segment at 99–101 is interaction with target base in tRNA; the sequence is NPD. Residue Cys-104 is the Nucleophile of the active site. Cys-104 and Cys-201 form a disulfide bridge. Gly-128 provides a ligand contact to ATP. The segment at 151 to 153 is interaction with tRNA; the sequence is KDQ. The active-site Cysteine persulfide intermediate is the Cys-201. Positions 313-314 are interaction with tRNA; it reads RY.

Belongs to the MnmA/TRMU family.

The protein resides in the cytoplasm. The enzyme catalyses S-sulfanyl-L-cysteinyl-[protein] + uridine(34) in tRNA + AH2 + ATP = 2-thiouridine(34) in tRNA + L-cysteinyl-[protein] + A + AMP + diphosphate + H(+). In terms of biological role, catalyzes the 2-thiolation of uridine at the wobble position (U34) of tRNA, leading to the formation of s(2)U34. The polypeptide is tRNA-specific 2-thiouridylase MnmA (Streptococcus equi subsp. zooepidemicus (strain H70)).